The following is a 551-amino-acid chain: Hydroxymethylpyrimidine/phosphomethylpyrimidine kinase THI20 (551 aa).

Glutamine 64 is a binding site for 4-amino-5-hydroxymethyl-2-methylpyrimidine. Cysteine 468 functions as the Nucleophile in the catalytic mechanism. The Proton donor role is filled by glutamate 540.

In the N-terminal section; belongs to the ThiD family. The protein in the C-terminal section; belongs to the thiaminase-2 family.

The enzyme catalyses 4-amino-5-hydroxymethyl-2-methylpyrimidine + ATP = 4-amino-2-methyl-5-(phosphooxymethyl)pyrimidine + ADP + H(+). It carries out the reaction 4-amino-2-methyl-5-(phosphooxymethyl)pyrimidine + ATP = 4-amino-2-methyl-5-(diphosphooxymethyl)pyrimidine + ADP. The catalysed reaction is thiamine + H2O = 5-(2-hydroxyethyl)-4-methylthiazole + 4-amino-5-hydroxymethyl-2-methylpyrimidine + H(+). It participates in cofactor biosynthesis; thiamine diphosphate biosynthesis; 4-amino-2-methyl-5-diphosphomethylpyrimidine from 5-amino-1-(5-phospho-D-ribosyl)imidazole: step 2/3. It functions in the pathway cofactor biosynthesis; thiamine diphosphate biosynthesis; 4-amino-2-methyl-5-diphosphomethylpyrimidine from 5-amino-1-(5-phospho-D-ribosyl)imidazole: step 3/3. Trifunctional protein with both thiamine biosynthetic and degradative activity. Within the thiamine biosynthesis pathway, catalyzes the phosphorylation of hydroxymethylpyrimidine (HMP) to hydroxymethylpyrimidine phosphate (HMP-P), as well as of HMP-P to HMP-PP. Also has thiaminase II activity and degrades thiamine using water as the nucleophile, resulting only in the formation of HMP (4-amino-2-methyl-5-hydroxymethylpyrimidine) and Thz (4-methyl-5-thiazole ethanol). The sequence is that of Hydroxymethylpyrimidine/phosphomethylpyrimidine kinase THI20 from Saccharomyces cerevisiae (strain ATCC 204508 / S288c) (Baker's yeast).